The sequence spans 26 residues: Conotoxin Eb6.15 (26 aa).

Intrachain disulfides connect Cys-7–Cys-18 and Cys-13–Cys-25.

It belongs to the conotoxin O1 superfamily. In terms of tissue distribution, expressed by the venom duct.

It localises to the secreted. The sequence is that of Conotoxin Eb6.15 (E1) from Conus ebraeus (Hebrew cone).